The sequence spans 171 residues: MEDFYVEDYLVKGDRYYTKEHEWVRVKNGFAEVGITDYAQKQLGDIVYVDLPEKGKEVDAGDTLANIESVKNVAPVYAPVTGTVVEVNEDLKDEPGIINDDPYEAGWIAVIEMKDPTEVEDLMTAQDYAEYLKEIVEEEKEEEVEVKEEELIETESIEELSEEELGYEENK.

One can recognise a Lipoyl-binding domain in the interval Phe30 to Glu112. Position 71 is an N6-lipoyllysine (Lys71). Positions Glu139–Lys171 are disordered.

Belongs to the GcvH family. In terms of assembly, the glycine cleavage system is composed of four proteins: P, T, L and H. (R)-lipoate is required as a cofactor.

Functionally, the glycine cleavage system catalyzes the degradation of glycine. The H protein shuttles the methylamine group of glycine from the P protein to the T protein. The chain is Glycine cleavage system H protein 4 from Aquifex aeolicus (strain VF5).